The sequence spans 428 residues: 5-methylthioadenosine/S-adenosylhomocysteine deaminase (428 aa).

Zn(2+) contacts are provided by histidine 65 and histidine 67. Substrate contacts are provided by glutamate 94, arginine 158, and histidine 184. Histidine 211 lines the Zn(2+) pocket. Substrate-binding residues include glutamate 214 and aspartate 299. Zn(2+) is bound at residue aspartate 299.

Belongs to the metallo-dependent hydrolases superfamily. MTA/SAH deaminase family. The cofactor is Zn(2+).

The enzyme catalyses S-adenosyl-L-homocysteine + H2O + H(+) = S-inosyl-L-homocysteine + NH4(+). It carries out the reaction S-methyl-5'-thioadenosine + H2O + H(+) = S-methyl-5'-thioinosine + NH4(+). Catalyzes the deamination of 5-methylthioadenosine and S-adenosyl-L-homocysteine into 5-methylthioinosine and S-inosyl-L-homocysteine, respectively. Is also able to deaminate adenosine. The protein is 5-methylthioadenosine/S-adenosylhomocysteine deaminase of Moorella thermoacetica (strain ATCC 39073 / JCM 9320).